Reading from the N-terminus, the 260-residue chain is 5'-nucleotidase SurE (260 aa).

A divalent metal cation is bound by residues Asp8, Asp9, Ser43, and Asn96.

The protein belongs to the SurE nucleotidase family. The cofactor is a divalent metal cation.

The protein resides in the cytoplasm. It catalyses the reaction a ribonucleoside 5'-phosphate + H2O = a ribonucleoside + phosphate. Nucleotidase that shows phosphatase activity on nucleoside 5'-monophosphates. The polypeptide is 5'-nucleotidase SurE (Ruegeria sp. (strain TM1040) (Silicibacter sp.)).